The chain runs to 443 residues: Xaa-Pro dipeptidase (443 aa).

The Mn(2+) site is built by aspartate 246, aspartate 257, histidine 339, glutamate 384, and glutamate 423.

It belongs to the peptidase M24B family. Bacterial-type prolidase subfamily. The cofactor is Mn(2+).

It carries out the reaction Xaa-L-Pro dipeptide + H2O = an L-alpha-amino acid + L-proline. In terms of biological role, splits dipeptides with a prolyl residue in the C-terminal position. The sequence is that of Xaa-Pro dipeptidase from Enterobacter sp. (strain 638).